A 173-amino-acid polypeptide reads, in one-letter code: Bifunctional protein PyrR (173 aa).

A PRPP-binding motif is present at residues 93-105 (VILVDDVLYTGRT).

It belongs to the purine/pyrimidine phosphoribosyltransferase family. PyrR subfamily. As to quaternary structure, homodimer and homohexamer; in equilibrium.

The catalysed reaction is UMP + diphosphate = 5-phospho-alpha-D-ribose 1-diphosphate + uracil. Regulates transcriptional attenuation of the pyrimidine nucleotide (pyr) operon by binding in a uridine-dependent manner to specific sites on pyr mRNA. This disrupts an antiterminator hairpin in the RNA and favors formation of a downstream transcription terminator, leading to a reduced expression of downstream genes. In terms of biological role, also displays a weak uracil phosphoribosyltransferase activity which is not physiologically significant. The protein is Bifunctional protein PyrR of Streptococcus thermophilus (strain ATCC BAA-491 / LMD-9).